A 125-amino-acid polypeptide reads, in one-letter code: Photosystem II extrinsic protein U (125 aa).

An N-terminal signal peptide occupies residues 1–29; sequence MKRLLSWLTGLVVIAGLLIGLLVPPSVSA.

This sequence belongs to the PsbU family. PSII is composed of 1 copy each of membrane proteins PsbA, PsbB, PsbC, PsbD, PsbE, PsbF, PsbH, PsbI, PsbJ, PsbK, PsbL, PsbM, PsbT, PsbX, PsbY, PsbZ, Psb30/Ycf12, peripheral proteins PsbO, CyanoQ (PsbQ), PsbU, PsbV and a large number of cofactors. It forms dimeric complexes.

It localises to the cellular thylakoid membrane. Its function is as follows. One of the extrinsic, lumenal subunits of photosystem II (PSII). PSII is a light-driven water plastoquinone oxidoreductase, using light energy to abstract electrons from H(2)O, generating a proton gradient subsequently used for ATP formation. The extrinsic proteins stabilize the structure of photosystem II oxygen-evolving complex (OEC), the ion environment of oxygen evolution and protect the OEC against heat-induced inactivation. In Synechococcus sp. (strain CC9311), this protein is Photosystem II extrinsic protein U.